The sequence spans 95 residues: Large ribosomal subunit protein bL25 (95 aa).

The protein belongs to the bacterial ribosomal protein bL25 family. In terms of assembly, part of the 50S ribosomal subunit; part of the 5S rRNA/L5/L18/L25 subcomplex. Contacts the 5S rRNA. Binds to the 5S rRNA independently of L5 and L18.

This is one of the proteins that binds to the 5S RNA in the ribosome where it forms part of the central protuberance. The sequence is that of Large ribosomal subunit protein bL25 from Shewanella woodyi (strain ATCC 51908 / MS32).